The primary structure comprises 237 residues: Phosphatidylserine decarboxylase proenzyme (237 aa).

Catalysis depends on serine 206, which acts as the Schiff-base intermediate with substrate; via pyruvic acid. Position 206 is a pyruvic acid (Ser); by autocatalysis (serine 206).

This sequence belongs to the phosphatidylserine decarboxylase family. PSD-A subfamily. Heterodimer of a large membrane-associated beta subunit and a small pyruvoyl-containing alpha subunit. The cofactor is pyruvate. Is synthesized initially as an inactive proenzyme. Formation of the active enzyme involves a self-maturation process in which the active site pyruvoyl group is generated from an internal serine residue via an autocatalytic post-translational modification. Two non-identical subunits are generated from the proenzyme in this reaction, and the pyruvate is formed at the N-terminus of the alpha chain, which is derived from the carboxyl end of the proenzyme. The post-translation cleavage follows an unusual pathway, termed non-hydrolytic serinolysis, in which the side chain hydroxyl group of the serine supplies its oxygen atom to form the C-terminus of the beta chain, while the remainder of the serine residue undergoes an oxidative deamination to produce ammonia and the pyruvoyl prosthetic group on the alpha chain.

It localises to the cell membrane. The enzyme catalyses a 1,2-diacyl-sn-glycero-3-phospho-L-serine + H(+) = a 1,2-diacyl-sn-glycero-3-phosphoethanolamine + CO2. It participates in phospholipid metabolism; phosphatidylethanolamine biosynthesis; phosphatidylethanolamine from CDP-diacylglycerol: step 2/2. Its function is as follows. Catalyzes the formation of phosphatidylethanolamine (PtdEtn) from phosphatidylserine (PtdSer). The polypeptide is Phosphatidylserine decarboxylase proenzyme (Mycobacteroides abscessus (strain ATCC 19977 / DSM 44196 / CCUG 20993 / CIP 104536 / JCM 13569 / NCTC 13031 / TMC 1543 / L948) (Mycobacterium abscessus)).